The sequence spans 108 residues: Urease subunit gamma (108 aa).

Belongs to the urease gamma subunit family. Heterotrimer of UreA (gamma), UreB (beta) and UreC (alpha) subunits. Three heterotrimers associate to form the active enzyme.

The protein resides in the cytoplasm. The enzyme catalyses urea + 2 H2O + H(+) = hydrogencarbonate + 2 NH4(+). Its pathway is nitrogen metabolism; urea degradation; CO(2) and NH(3) from urea (urease route): step 1/1. In Haloquadratum walsbyi (strain DSM 16790 / HBSQ001), this protein is Urease subunit gamma.